Here is a 104-residue protein sequence, read N- to C-terminus: Large ribosomal subunit protein bL21c (104 aa).

This sequence belongs to the bacterial ribosomal protein bL21 family. Part of the 50S ribosomal subunit.

The protein resides in the plastid. It is found in the cyanelle. Functionally, this protein binds to 23S rRNA. The sequence is that of Large ribosomal subunit protein bL21c from Cyanophora paradoxa.